We begin with the raw amino-acid sequence, 263 residues long: Uroporphyrinogen-III C-methyltransferase (263 aa).

S-adenosyl-L-homocysteine-binding positions include P20, 96-98, 126-127, M180, and A237; these read GGD and TA.

This sequence belongs to the precorrin methyltransferase family.

The catalysed reaction is uroporphyrinogen III + 2 S-adenosyl-L-methionine = precorrin-2 + 2 S-adenosyl-L-homocysteine + H(+). The protein operates within cofactor biosynthesis; adenosylcobalamin biosynthesis; precorrin-2 from uroporphyrinogen III: step 1/1. It participates in porphyrin-containing compound metabolism; siroheme biosynthesis; precorrin-2 from uroporphyrinogen III: step 1/1. In terms of biological role, catalyzes the two successive C-2 and C-7 methylation reactions involved in the conversion of uroporphyrinogen III to precorrin-2 via the intermediate formation of precorrin-1. It is a step in the biosynthesis of both cobalamin (vitamin B12) and siroheme. This is Uroporphyrinogen-III C-methyltransferase (cobA) from Synechocystis sp. (strain ATCC 27184 / PCC 6803 / Kazusa).